Reading from the N-terminus, the 179-residue chain is Adenine phosphoribosyltransferase (179 aa).

This sequence belongs to the purine/pyrimidine phosphoribosyltransferase family. As to quaternary structure, homodimer.

It is found in the cytoplasm. The enzyme catalyses AMP + diphosphate = 5-phospho-alpha-D-ribose 1-diphosphate + adenine. The protein operates within purine metabolism; AMP biosynthesis via salvage pathway; AMP from adenine: step 1/1. In terms of biological role, catalyzes a salvage reaction resulting in the formation of AMP, that is energically less costly than de novo synthesis. This is Adenine phosphoribosyltransferase from Bradyrhizobium sp. (strain ORS 278).